Reading from the N-terminus, the 342-residue chain is Cell division protein ZipA (342 aa).

Over 1-6 (MEDLQL) the chain is Periplasmic. Residues 7–27 (VLFILGAIAIVAVLVHGFWSI) form a helical membrane-spanning segment. Residues 28–342 (RRQQPKSLKD…DYLHRIRANA (315 aa)) lie on the Cytoplasmic side of the membrane. Residues 33–57 (KSLKDSPMGNFYKQQADKESPPKRV) form a disordered region. The span at 47-57 (QADKESPPKRV) shows a compositional bias: basic and acidic residues.

It belongs to the ZipA family. Interacts with FtsZ via their C-terminal domains.

Its subcellular location is the cell inner membrane. Functionally, essential cell division protein that stabilizes the FtsZ protofilaments by cross-linking them and that serves as a cytoplasmic membrane anchor for the Z ring. Also required for the recruitment to the septal ring of downstream cell division proteins. This chain is Cell division protein ZipA, found in Shewanella putrefaciens (strain CN-32 / ATCC BAA-453).